The primary structure comprises 180 residues: Sperm protein associated with the nucleus on the X chromosome N2 (180 aa).

2 disordered regions span residues Met1–Thr46 and Asn64–Asp180. Residues Gly10–Glu26 show a composition bias toward basic and acidic residues. The span at Gln82–Ser169 shows a compositional bias: acidic residues. Over residues Ser170 to Asp180 the composition is skewed to low complexity.

It belongs to the SPAN-X family.

This is Sperm protein associated with the nucleus on the X chromosome N2 (SPANXN2) from Homo sapiens (Human).